Here is a 289-residue protein sequence, read N- to C-terminus: tRNA pseudouridine synthase B (289 aa).

Catalysis depends on Asp38, which acts as the Nucleophile.

Belongs to the pseudouridine synthase TruB family. Type 1 subfamily.

It carries out the reaction uridine(55) in tRNA = pseudouridine(55) in tRNA. In terms of biological role, responsible for synthesis of pseudouridine from uracil-55 in the psi GC loop of transfer RNAs. This Clostridium acetobutylicum (strain ATCC 824 / DSM 792 / JCM 1419 / IAM 19013 / LMG 5710 / NBRC 13948 / NRRL B-527 / VKM B-1787 / 2291 / W) protein is tRNA pseudouridine synthase B.